Consider the following 1133-residue polypeptide: Protein TOPLESS-RELATED PROTEIN 2 (1133 aa).

The region spanning 4–36 (LSRELVFLILQFLDEEKFKETVHKLEQESAFYF) is the LisH domain. Positions 34–92 (FYFNMKHFEDLVQGGEWDEVEKYLSGFTKVEDNRYSMKIFFEIRKQKYLEALDRHDRAK) constitute a CTLH domain. WD repeat units lie at residues 344-384 (NQGS…RIAH), 451-492 (AHIG…KQYT), 495-536 (GHEA…SRVD), 539-582 (APGH…IKRT), 586-625 (FRKR…ILTT), 630-669 (GGLP…RLLR), 771-810 (ATSS…RNPN), 838-876 (NPEE…VMTT), 879-919 (APPP…VKSK), 922-961 (GHSK…KKKS), 970-1011 (RSGA…RSWS), and 1015-1054 (ALPA…LRCR). The interval 1102-1133 (DSDPKWGVAPPQDNGTHPTISAAPAAANKPEV) is disordered.

Tetramer. Interacts with D53, probably via the EAR motifs. Binds to AP2-1/TOE1, AP2-3/SNB and AP2-2/IDS1. Interacts with WOX1. Interacts with MOF1. As to expression, expressed in stems and panicles. Detected in roots, seeds, leaves and sheath. Expressed in the meristem and lateral organ primordia.

It is found in the nucleus. Transcriptional corepressor involved in branch formation regulation, presumably by suppressing primary branch formation and promoting secondary branch formation. Required for the cell elongation in the first internode and pollen development. Probable downstream regulator of strigolactones signaling important in axillary meristem maintenance. Acts in auxin signaling and is associated with the regulation of histone deacetylation. Essential for the function of miR172 microRNA and its target genes in regulating panicle development. The sequence is that of Protein TOPLESS-RELATED PROTEIN 2 from Oryza sativa subsp. japonica (Rice).